We begin with the raw amino-acid sequence, 374 residues long: 3-dehydroquinate synthase (374 aa).

It belongs to the archaeal-type DHQ synthase family.

The catalysed reaction is 2-amino-2,3,7-trideoxy-D-lyxo-hept-6-ulosonate + NAD(+) + H2O = 3-dehydroquinate + NH4(+) + NADH + H(+). In terms of biological role, catalyzes the oxidative deamination and cyclization of 2-amino-3,7-dideoxy-D-threo-hept-6-ulosonic acid (ADH) to yield 3-dehydroquinate (DHQ), which is fed into the canonical shikimic pathway of aromatic amino acid biosynthesis. In Methanocella arvoryzae (strain DSM 22066 / NBRC 105507 / MRE50), this protein is 3-dehydroquinate synthase.